We begin with the raw amino-acid sequence, 195 residues long: ALK and LTK ligand 2b (195 aa).

2 disulfide bridges follow: Cys-156–Cys-192 and Cys-170–Cys-179.

Belongs to the ALKAL family. Homodimer. In terms of tissue distribution, highly expressed in the swim bladder and single cells of unknown identity in the head.

It localises to the secreted. Its subcellular location is the cell membrane. Functionally, cytokine that acts as a physiological ligand for receptor tyrosine kinases LTK and ALK. Required for neural crest cell differentiation and iridophore development during embryonic iridophore development and adult stripe development by acting as a receptor for LTK. Also required for iridophore formation in the adult eye. The protein is ALK and LTK ligand 2b of Danio rerio (Zebrafish).